An 832-amino-acid chain; its full sequence is Adhesin AWP2 (832 aa).

The signal sequence occupies residues 1-25; the sequence is MRKLPLFMAWKFWLICLYIIKVAST. N-linked (GlcNAc...) asparagine glycosylation is found at asparagine 187, asparagine 290, asparagine 372, asparagine 390, asparagine 435, asparagine 448, asparagine 472, asparagine 482, asparagine 507, asparagine 512, asparagine 515, asparagine 534, asparagine 562, asparagine 579, asparagine 695, and asparagine 721. The interval 722 to 747 is disordered; it reads QTTSPSMHTTSLVGSENGVSAKTVND.

The protein localises to the secreted. The protein resides in the cell wall. In terms of biological role, mediates cell-substrate adhesion and promotes biofilm formation. In Candida glabrata (strain ATCC 2001 / BCRC 20586 / JCM 3761 / NBRC 0622 / NRRL Y-65 / CBS 138) (Yeast), this protein is Adhesin AWP2.